A 547-amino-acid polypeptide reads, in one-letter code: Glucose-6-phosphate isomerase (547 aa).

E351 (proton donor) is an active-site residue. Residues H382 and K511 contribute to the active site.

This sequence belongs to the GPI family.

The protein resides in the cytoplasm. The catalysed reaction is alpha-D-glucose 6-phosphate = beta-D-fructose 6-phosphate. It participates in carbohydrate biosynthesis; gluconeogenesis. The protein operates within carbohydrate degradation; glycolysis; D-glyceraldehyde 3-phosphate and glycerone phosphate from D-glucose: step 2/4. Catalyzes the reversible isomerization of glucose-6-phosphate to fructose-6-phosphate. The protein is Glucose-6-phosphate isomerase of Xanthobacter autotrophicus (strain ATCC BAA-1158 / Py2).